The sequence spans 89 residues: MPRSTKKGPFFDHHLIKKVESAAGSKRPIKTCSRRSVILPQMVGHTIAIHNGKNYHPVVINENMVGHKLGEFSITRVFKGHGGDKKSGK.

The protein belongs to the universal ribosomal protein uS19 family.

In terms of biological role, protein S19 forms a complex with S13 that binds strongly to the 16S ribosomal RNA. The polypeptide is Small ribosomal subunit protein uS19 (Xylella fastidiosa (strain M12)).